Consider the following 241-residue polypeptide: MGRGRVELKRIENKINRQVTFAKRRNGLLKKAYELSVLCDAEVALIIFSNRGKLYEFCSSSSMLKTLERYQKCNYGAPETNISTREALEISSQQEYLKLKARYEALQRSQRNLLGEDLGPLNSKELESLERQLDMSLKQIRSTRTQLMLDQLQDLQRKEHALNEANRTLKQRLMEGSTLNLQWQQNAQDVGYGRQATQTQGDGFFHPLECEPTLQIGYQNDPITVGGAGPSVNNYMAGWLP.

The region spanning 3–57 (RGRVELKRIENKINRQVTFAKRRNGLLKKAYELSVLCDAEVALIIFSNRGKLYEF) is the MADS-box domain. Residues 89-179 (EISSQQEYLK…KQRLMEGSTL (91 aa)) enclose the K-box domain.

It is found in the nucleus. Functionally, probable transcription factor. This chain is Agamous-like MADS-box protein AGL9 homolog (FBP2), found in Petunia hybrida (Petunia).